We begin with the raw amino-acid sequence, 248 residues long: Tryptophan synthase alpha chain (248 aa).

Catalysis depends on proton acceptor residues Glu-36 and Asp-47.

Belongs to the TrpA family. In terms of assembly, tetramer of two alpha and two beta chains.

The enzyme catalyses (1S,2R)-1-C-(indol-3-yl)glycerol 3-phosphate + L-serine = D-glyceraldehyde 3-phosphate + L-tryptophan + H2O. The protein operates within amino-acid biosynthesis; L-tryptophan biosynthesis; L-tryptophan from chorismate: step 5/5. Functionally, the alpha subunit is responsible for the aldol cleavage of indoleglycerol phosphate to indole and glyceraldehyde 3-phosphate. This is Tryptophan synthase alpha chain from Archaeoglobus fulgidus (strain ATCC 49558 / DSM 4304 / JCM 9628 / NBRC 100126 / VC-16).